Here is an 873-residue protein sequence, read N- to C-terminus: Sine oculis-binding protein homolog (873 aa).

Residues 1–14 (MAEMEKEGRPPENK) are compositionally biased toward basic and acidic residues. Residues 1–26 (MAEMEKEGRPPENKRSRKPAHPVKRE) form a disordered region. 2 consecutive FCS-type zinc fingers follow at residues 142–180 (DDVS…KCFA) and 216–256 (FKNN…KCLN). Disordered regions lie at residues 308–339 (RRKA…DTAN), 413–484 (RGPP…PGAP), and 550–646 (KPPN…PGVL). The span at 318–339 (AGQSQGPGPSASTTVSPSDTAN) shows a compositional bias: polar residues. Over residues 417–433 (HHASNPNSPLSNPMLPG) the composition is skewed to low complexity. The span at 460-484 (IHPPSTPTMPGNPPGLLPPPPPGAP) shows a compositional bias: pro residues. Over residues 614–625 (EHGRSEVVDLTR) the composition is skewed to basic and acidic residues. Residues 620–624 (VVDLT) carry the SUMO interaction motif 1 (SIM); mediates the binding to polysumoylated substrates motif. The residue at position 629 (Ser629) is a Phosphoserine. The SUMO interaction motif 2 (SIM); mediates the binding to polysumoylated substrates motif lies at 653 to 657 (VIDLT). A Glycyl lysine isopeptide (Lys-Gly) (interchain with G-Cter in SUMO2) cross-link involves residue Lys677. Ser699 is subject to Phosphoserine. Residues 730–771 (AAAEGAKSAEPPPEQPPPPPPPAPPKKLLSPEEPAVSELESV) are disordered. Residues 739–754 (EPPPEQPPPPPPPAPP) show a composition bias toward pro residues.

Belongs to the SOBP family. Interacts (via SIM domains) with SUMO1 and SUMO2.

Functionally, implicated in development of the cochlea. The sequence is that of Sine oculis-binding protein homolog from Homo sapiens (Human).